The following is a 395-amino-acid chain: E3 ubiquitin-protein ligase RNFT1 (395 aa).

2 disordered regions span residues 1 to 58 (MQAS…SSRN) and 78 to 97 (YSHS…GEHG). 6 helical membrane-spanning segments follow: residues 118–138 (ILIL…LGIG), 165–185 (CAWL…TFHS), 193–213 (IFLN…IVGI), 216–236 (FILK…PSFI), 258–278 (IFVP…FGNV), and 283–303 (LGIL…FGHL). Positions 328-379 (CSDMDGICTICQAEFQKPVLLFCQHIFCEECITLWFNREKTCPLCRTVISEC) are required for ubiquitin ligase activity and for protection against ER stress-induced cell death. The segment at 335–373 (CTICQAEFQKPVLLFCQHIFCEECITLWFNREKTCPLCR) adopts an RING-type zinc-finger fold.

In terms of tissue distribution, predominantly expressed in testis.

It is found in the early endosome membrane. The catalysed reaction is S-ubiquitinyl-[E2 ubiquitin-conjugating enzyme]-L-cysteine + [acceptor protein]-L-lysine = [E2 ubiquitin-conjugating enzyme]-L-cysteine + N(6)-ubiquitinyl-[acceptor protein]-L-lysine.. It participates in protein modification; protein ubiquitination. Functionally, E3 ubiquitin-protein ligase that acts in the endoplasmic reticulum (ER)-associated degradation (ERAD) pathway, which targets misfolded proteins that accumulate in the endoplasmic reticulum (ER) for ubiquitination and subsequent proteasome-mediated degradation. Protects cells from ER stress-induced apoptosis. The protein is E3 ubiquitin-protein ligase RNFT1 (Rnft1) of Mus musculus (Mouse).